The following is a 130-amino-acid chain: Small ribosomal subunit protein uS11 (130 aa).

Belongs to the universal ribosomal protein uS11 family. In terms of assembly, part of the 30S ribosomal subunit. Interacts with proteins S7 and S18. Binds to IF-3.

Functionally, located on the platform of the 30S subunit, it bridges several disparate RNA helices of the 16S rRNA. Forms part of the Shine-Dalgarno cleft in the 70S ribosome. The sequence is that of Small ribosomal subunit protein uS11 from Syntrophus aciditrophicus (strain SB).